Consider the following 305-residue polypeptide: Probable DNA-invertase y4cG (305 aa).

Positions 15–148 (RLIGYARVST…SGMQAAKARG (134 aa)) constitute a Resolvase/invertase-type recombinase catalytic domain. Ser23 functions as the O-(5'-phospho-DNA)-serine intermediate in the catalytic mechanism.

The protein belongs to the site-specific recombinase resolvase family.

The chain is Probable DNA-invertase y4cG from Sinorhizobium fredii (strain NBRC 101917 / NGR234).